The primary structure comprises 415 residues: Arrestin domain-containing protein 4 (415 aa).

2 short sequence motifs (PPxY motif) span residues proline 347–tyrosine 350 and proline 392–tyrosine 395.

Belongs to the arrestin family. As to quaternary structure, interacts with ADRB2. Interacts (via PPxY motifs) with ITCH, NEDD4L and WWP2. Interacts with AVPR2. Identified in a complex containing at least ARRDC4, AVPR2 and HGS. Interacts with SLC11A2; controls the incorporation of SLC11A2 into extracellular vesicles through an ubiquitination-dependent mechanism. Interacts with TRIM65.

Its subcellular location is the early endosome. It is found in the cell membrane. It localises to the cytoplasmic vesicle. Functionally, functions as an adapter recruiting ubiquitin-protein ligases to their specific substrates. Plays a role in endocytosis of activated G protein-coupled receptors (GPCRs). Through an ubiquitination-dependent mechanism also plays a role in the incorporation of SLC11A2 into extracellular vesicles. May play a role in glucose uptake. Participates in innate immune response by promoting IFIH1/MDA5 activation through interaction with TRIM65. This is Arrestin domain-containing protein 4 from Mus musculus (Mouse).